Reading from the N-terminus, the 54-residue chain is Light-harvesting protein B-880 beta chain (54 aa).

Topologically, residues 1 to 20 (AEDRSSLSGVSDAEAKEFHA) are cytoplasmic. 2 residues coordinate a bacteriochlorophyll: histidine 19 and histidine 37. The chain crosses the membrane as a helical span at residues 21–43 (LFVSSFMGFMVVAVLAHVLAWAW). Topologically, residues 44-54 (RPWIPGPKGWA) are periplasmic.

This sequence belongs to the antenna complex beta subunit family. The core complex is formed by different alpha and beta chains, binding bacteriochlorophyll molecules, and arranged most probably in tetrameric structures disposed around the reaction center. The non-pigmented gamma chains may constitute additional components.

The protein localises to the cell inner membrane. Antenna complexes are light-harvesting systems, which transfer the excitation energy to the reaction centers. This is Light-harvesting protein B-880 beta chain from Rhodoblastus acidophilus (Rhodopseudomonas acidophila).